Here is a 210-residue protein sequence, read N- to C-terminus: Large ribosomal subunit protein bL25 (210 aa).

Residues 1–23 form a disordered region; it reads MSDIGTLSAKGRDRAGKGAARAT.

It belongs to the bacterial ribosomal protein bL25 family. CTC subfamily. In terms of assembly, part of the 50S ribosomal subunit; part of the 5S rRNA/L5/L18/L25 subcomplex. Contacts the 5S rRNA. Binds to the 5S rRNA independently of L5 and L18.

Functionally, this is one of the proteins that binds to the 5S RNA in the ribosome where it forms part of the central protuberance. The sequence is that of Large ribosomal subunit protein bL25 from Rhodospirillum rubrum (strain ATCC 11170 / ATH 1.1.1 / DSM 467 / LMG 4362 / NCIMB 8255 / S1).